Here is a 117-residue protein sequence, read N- to C-terminus: Large ribosomal subunit protein bL20c (117 aa).

It belongs to the bacterial ribosomal protein bL20 family.

The protein resides in the plastid. The protein localises to the chloroplast. Functionally, binds directly to 23S ribosomal RNA and is necessary for the in vitro assembly process of the 50S ribosomal subunit. It is not involved in the protein synthesizing functions of that subunit. This is Large ribosomal subunit protein bL20c from Arabis hirsuta (Hairy rock-cress).